A 95-amino-acid polypeptide reads, in one-letter code: MSVNDKTIKRIAHLARIAIHDNETERITKKFNAILDFAKQLDEIDVTGVDPLISVIPMTLRTREDSITDGNKAADIVANAPVTEENFFLVSKIVE.

This sequence belongs to the GatC family. As to quaternary structure, heterotrimer of A, B and C subunits.

It catalyses the reaction L-glutamyl-tRNA(Gln) + L-glutamine + ATP + H2O = L-glutaminyl-tRNA(Gln) + L-glutamate + ADP + phosphate + H(+). It carries out the reaction L-aspartyl-tRNA(Asn) + L-glutamine + ATP + H2O = L-asparaginyl-tRNA(Asn) + L-glutamate + ADP + phosphate + 2 H(+). Allows the formation of correctly charged Asn-tRNA(Asn) or Gln-tRNA(Gln) through the transamidation of misacylated Asp-tRNA(Asn) or Glu-tRNA(Gln) in organisms which lack either or both of asparaginyl-tRNA or glutaminyl-tRNA synthetases. The reaction takes place in the presence of glutamine and ATP through an activated phospho-Asp-tRNA(Asn) or phospho-Glu-tRNA(Gln). This chain is Aspartyl/glutamyl-tRNA(Asn/Gln) amidotransferase subunit C, found in Bartonella bacilliformis (strain ATCC 35685 / KC583 / Herrer 020/F12,63).